The chain runs to 2559 residues: Stabilin-2 (2559 aa).

An N-terminal signal peptide occupies residues 1–28 (MARSKLLLGKLLPLILIFLGLLVQNACS). At 29–2464 (PTEAPELTKR…PPTAATAAHS (2436 aa)) the chain is on the extracellular side. The N-linked (GlcNAc...) asparagine glycan is linked to Asn-71. 5 EGF-like domains span residues 116 to 156 (DCME…TACE), 164 to 201 (FGPN…PRCD), 203 to 244 (PIPE…QTCK), 245 to 284 (PINP…QVCL), and 330 to 370 (MTDI…LNCY). 3 cysteine pairs are disulfide-bonded: Cys-120–Cys-134, Cys-128–Cys-144, and Cys-146–Cys-155. Residue Asn-167 is glycosylated (N-linked (GlcNAc...) asparagine). 12 disulfide bridges follow: Cys-168/Cys-179, Cys-172/Cys-189, Cys-191/Cys-200, Cys-207/Cys-218, Cys-212/Cys-230, Cys-232/Cys-243, Cys-249/Cys-260, Cys-254/Cys-270, Cys-272/Cys-283, Cys-334/Cys-346, Cys-340/Cys-356, and Cys-358/Cys-369. N-linked (GlcNAc...) asparagine glycosylation is present at Asn-345. FAS1 domains lie at 379-512 (ELNT…DRAM) and 522-659 (NPQQ…TGVL). Residues Asn-572, Asn-626, Asn-673, and Asn-691 are each glycosylated (N-linked (GlcNAc...) asparagine). The EGF-like 6 domain maps to 743–783 (DCNPCPGGFMNPCSGNGQCIDGLGGNGTCICEDGFQGSRCQ). Disulfide bonds link Cys-747–Cys-761, Cys-755–Cys-771, and Cys-773–Cys-782. Residue Asn-768 is glycosylated (N-linked (GlcNAc...) asparagine). Asn-796 carries an N-linked (GlcNAc...) asparagine glycan. 4 consecutive EGF-like domains span residues 833–873 (QTSA…TLCS), 874–917 (KKDP…RDCV), 918–960 (EINS…IDCE), and 961–1002 (PIIS…VLCY). Intrachain disulfides connect Cys-837–Cys-850, Cys-844–Cys-859, Cys-861–Cys-872, Cys-878–Cys-893, Cys-887–Cys-903, Cys-905–Cys-916, Cys-922–Cys-936, Cys-930–Cys-946, Cys-948–Cys-959, Cys-965–Cys-978, Cys-972–Cys-988, and Cys-990–Cys-1001. Asn-854 carries an N-linked (GlcNAc...) asparagine glycan. Asn-933 carries an N-linked (GlcNAc...) asparagine glycan. FAS1 domains are found at residues 1002-1135 (YGNV…NKVL) and 1145-1273 (LPSL…EKVL). 5 N-linked (GlcNAc...) asparagine glycosylation sites follow: Asn-1024, Asn-1036, Asn-1108, Asn-1255, and Asn-1283. One can recognise a Laminin EGF-like 1 domain in the interval 1350 to 1415 (PQCQACPGKG…CSCVHGRCNQ (66 aa)). 18 cysteine pairs are disulfide-bonded: Cys-1355–Cys-1369, Cys-1363–Cys-1379, Cys-1381–Cys-1390, Cys-1402–Cys-1413, Cys-1406–Cys-1423, Cys-1425–Cys-1434, Cys-1443–Cys-1453, Cys-1447–Cys-1463, Cys-1465–Cys-1476, Cys-1482–Cys-1495, Cys-1489–Cys-1505, Cys-1507–Cys-1518, Cys-1524–Cys-1537, Cys-1531–Cys-1547, Cys-1549–Cys-1560, Cys-1566–Cys-1579, Cys-1573–Cys-1589, and Cys-1591–Cys-1602. Residues Asn-1374 and Asn-1386 are each glycosylated (N-linked (GlcNAc...) asparagine). EGF-like domains lie at 1439 to 1477 (TTDN…TVCT), 1478 to 1519 (AINA…IVCL), 1520 to 1561 (EINP…KVCT), and 1562 to 1603 (LINV…IVCR). Asn-1444 carries an N-linked (GlcNAc...) asparagine glycan. Asn-1472 carries an N-linked (GlcNAc...) asparagine glycan. N-linked (GlcNAc...) asparagine glycosylation occurs at Asn-1580. FAS1 domains follow at residues 1603–1731 (RGSI…DTLL) and 1747–1888 (VLLN…DCLL). Asn-1750 carries N-linked (GlcNAc...) asparagine glycosylation. The region spanning 1965-2030 (PDCQACPGGP…GCSEHGQCDE (66 aa)) is the Laminin EGF-like 2 domain. Intrachain disulfides connect Cys-1970/Cys-1984, Cys-1978/Cys-1994, Cys-1996/Cys-2005, Cys-2017/Cys-2028, Cys-2022/Cys-2038, Cys-2040/Cys-2049, Cys-2059/Cys-2069, Cys-2063/Cys-2075, Cys-2077/Cys-2088, Cys-2094/Cys-2107, Cys-2101/Cys-2116, Cys-2118/Cys-2129, Cys-2135/Cys-2149, Cys-2143/Cys-2159, Cys-2161/Cys-2172, Cys-2228/Cys-2296, and Cys-2252/Cys-2273. Asn-2001 carries N-linked (GlcNAc...) asparagine glycosylation. EGF-like domains lie at 2055–2089 (VIPV…ITCT), 2090–2130 (VVDF…HSCT), and 2131–2173 (EIDP…RDCE). Asn-2072 carries an N-linked (GlcNAc...) asparagine glycan. The Link domain occupies 2206-2298 (GVFHLRSPLG…SEMWDVFCYR (93 aa)). N-linked (GlcNAc...) asparagine glycans are attached at residues Asn-2287, Asn-2303, Asn-2375, Asn-2391, and Asn-2400. The FAS1 7 domain occupies 2318–2452 (NGNLLQVLMS…GVLHIISEPL (135 aa)). The chain crosses the membrane as a helical span at residues 2465 to 2485 (GLGTGIFCAVVLVTGAIALAA). Over 2486–2559 (YSYFRLNQRT…NSDPLGALRS (74 aa)) the chain is Cytoplasmic. Ser-2503 bears the Phosphoserine mark. Positions 2510 to 2520 (LAFGKQQPESI) are interaction with TMSB4X. Positions 2514-2559 (KQQPESITNPLYETSTPAAPEPSCDPFTDSGERELENSDPLGALRS) are disordered. A compositionally biased stretch (polar residues) spans 2516–2530 (QPESITNPLYETSTP).

In terms of assembly, interacts with heparin, alpha-M/beta-2 integrin (ITGAM and ITGB2), and thymosin beta 4 (TMSB4X). Interacts with GULP1. Associates with clathrin and adapter protein AP-2; in liver sinusoidal endothelial cells (LSECs). In terms of processing, glycosylated. Proteolytically processed to yield a smaller protein. Expressed in endothelial sinuses of liver, lymph nodes, bone marrow, spleen and in specialised structures of eye, heart, brain and kidney. Expression is detected in corneal and lens epithelium, in mesenchymal cells of the heart valves, in the ependymal cells lining the ventricles in the brain, and in the prismatic epithelial cells covering the renal papillae.

The protein localises to the cytoplasm. It is found in the cell membrane. Phosphatidylserine receptor that enhances the engulfment of apoptotic cells. Hyaluronan receptor that binds to and mediates endocytosis of hyaluronic acid (HA). Also acts, in different species, as a primary systemic scavenger receptor for heparin (Hep), chondroitin sulfate (CS), dermatan sulfate (DS), nonglycosaminoglycan (GAG), acetylated low-density lipoprotein (AcLDL), pro-collagen propeptides and advanced glycation end products (AGE). May serve to maintain tissue integrity by supporting extracellular matrix turnover or it may contribute to maintaining fluidity of bodily liquids by resorption of hyaluronan. Counter receptor which plays an important role in lymphocyte recruitment in the hepatic vasculature. Binds to both Gram-positive and Gram-negative bacteria and may play a role in defense against bacterial infection. The proteolytically processed short form also functions as an endocytosis receptor for heparin internalization as well as HA and CS. The protein is Stabilin-2 of Mus musculus (Mouse).